The following is a 379-amino-acid chain: ATP phosphoribosyltransferase regulatory subunit (379 aa).

The protein belongs to the class-II aminoacyl-tRNA synthetase family. HisZ subfamily. In terms of assembly, heteromultimer composed of HisG and HisZ subunits.

The protein localises to the cytoplasm. It functions in the pathway amino-acid biosynthesis; L-histidine biosynthesis; L-histidine from 5-phospho-alpha-D-ribose 1-diphosphate: step 1/9. Its function is as follows. Required for the first step of histidine biosynthesis. May allow the feedback regulation of ATP phosphoribosyltransferase activity by histidine. The chain is ATP phosphoribosyltransferase regulatory subunit from Sinorhizobium fredii (strain NBRC 101917 / NGR234).